The chain runs to 332 residues: Formamidase (332 aa).

The CN hydrolase domain occupies 14-259 (FLTALIQYPV…WEIVTAEVYP (246 aa)). Catalysis depends on Glu-60, which acts as the Proton acceptor. Lys-132 serves as the catalytic Proton donor. The Nucleophile role is filled by Cys-165.

It belongs to the carbon-nitrogen hydrolase superfamily. Aliphatic amidase family.

The enzyme catalyses formamide + H2O = formate + NH4(+). Functionally, is an aliphatic amidase with a restricted substrate specificity, as it only hydrolyzes formamide. This Bacillus cereus (strain ZK / E33L) protein is Formamidase.